Reading from the N-terminus, the 486-residue chain is Elastin-binding protein EbpS (486 aa).

Basic and acidic residues predominate over residues 1–40 (MSNNFKDDFEKNRQSIDTNSHQDHTEDVEKDQSELEHQDT). The disordered stretch occupies residues 1–314 (MSNNFKDDFE…NHDRDKERKK (314 aa)). Residues 2-204 (SNNFKDDFEK…ESKDHHSGKK (203 aa)) are Extracellular-facing. The segment at 14 to 34 (QSIDTNSHQDHTEDVEKDQSE) is elastin-binding. A compositionally biased stretch (polar residues) spans 64–85 (TNHNKQVHNESQTSEDNVQNEA). Basic and acidic residues-rich tracts occupy residues 103 to 118 (EPSH…EEYY), 126 to 160 (DKSH…KSEA), and 180 to 199 (SKDK…SKDH). Composition is skewed to low complexity over residues 204 to 225 (KGAA…MGVS) and 233 to 246 (DAQN…SNNS). The helical transmembrane segment at 205 to 225 (GAAIGAGTAGVAGAAGAMGVS) threads the bilayer. The Cytoplasmic segment spans residues 226–319 (KAKKHSNDAQ…KERKKGGMAK (94 aa)). The span at 247-259 (TEDKVSQDKSKDH) shows a compositional bias: basic and acidic residues. Residues 278-297 (GAASKSASAASKPHASNNAS) are compositionally biased toward low complexity. Positions 299–314 (NHDEHDNHDRDKERKK) are enriched in basic and acidic residues. The helical transmembrane segment at 320 to 340 (VLLPLIAAVLIIGALAIFGGM) threads the bilayer. The Extracellular portion of the chain corresponds to 341–486 (ALNNHNNGTK…IRNGQQIVIP (146 aa)). Residues 351–440 (ENKIANTNKN…QRQGGGQRHT (90 aa)) are disordered. Residues 361–398 (NADESKDKDTSKDASKDKSKSTDSDKSKEDQDKATKDE) show a composition bias toward basic and acidic residues. Low complexity predominate over residues 403–431 (QNNANQANNQAQNNQNQQQANQNQQQQQQ). The LysM domain maps to 437-485 (QRHTVNGQENLYRIAIQYYGSGSPENVEKIRRANGLSGNNIRNGQQIVI).

The protein localises to the cell membrane. In terms of biological role, promotes binding of soluble elastin peptides and tropoelastin to S.aureus cells although it is not able to promote bacterial adherence to immobilized elastin and, therefore, is not a microbial surface component recognizing adhesive matrix molecule (MSCRAMM). The sequence is that of Elastin-binding protein EbpS (ebpS) from Staphylococcus aureus (strain MSSA476).